A 159-amino-acid polypeptide reads, in one-letter code: 16 kDa outer membrane lipoprotein (159 aa).

Positions 1–21 (MNKKIFTLFLVVAASAIFAVS) are cleaved as a signal peptide. Cys22 carries the N-palmitoyl cysteine lipid modification. Cys22 is lipidated: S-diacylglycerol cysteine.

Its subcellular location is the cell outer membrane. This chain is 16 kDa outer membrane lipoprotein (smpA), found in Brachyspira hyodysenteriae (Treponema hyodysenteriae).